The primary structure comprises 192 residues: Transcription termination/antitermination protein NusG (192 aa).

The KOW domain maps to 140-168; sequence VGEVVTVTDGPFETFMGTVEEIDKERNRL.

This sequence belongs to the NusG family.

Participates in transcription elongation, termination and antitermination. The protein is Transcription termination/antitermination protein NusG of Rickettsia typhi (strain ATCC VR-144 / Wilmington).